Reading from the N-terminus, the 186-residue chain is Lipid A palmitoyltransferase PagP (186 aa).

Residues 1–25 (MKVSKYVAIFFFVFIQLISVGKVFA) form the signal peptide. Catalysis depends on residues His-58, Asp-101, and Ser-102.

This sequence belongs to the lipid A palmitoyltransferase family. In terms of assembly, homodimer.

It localises to the cell outer membrane. The catalysed reaction is lipid A (E. coli) + a 1-hexadecanoyl-2-acyl-sn-glycero-3-phosphocholine = hepta-acyl lipid A (E. coli) + a 2-acyl-sn-glycero-3-phosphocholine. It carries out the reaction lipid IIA + a 1-hexadecanoyl-2-acyl-sn-glycero-3-phosphocholine = lipid IIB + a 2-acyl-sn-glycero-3-phosphocholine. The enzyme catalyses lipid IVA (E. coli) + a 1-hexadecanoyl-2-acyl-sn-glycero-3-phosphocholine = lipid IVB (E. coli) + a 2-acyl-sn-glycero-3-phosphocholine. Functionally, transfers a palmitate residue from the sn-1 position of a phospholipid to the N-linked hydroxymyristate on the proximal unit of lipid A or its precursors. This is Lipid A palmitoyltransferase PagP from Escherichia coli O6:K15:H31 (strain 536 / UPEC).